The primary structure comprises 164 residues: NADH-quinone oxidoreductase subunit I 2 (164 aa).

2 4Fe-4S ferredoxin-type domains span residues 39 to 71 and 81 to 110; these read IVLT…VVKA and ESFR…LTPD. [4Fe-4S] cluster-binding residues include C51, C54, C57, C61, C90, C93, C96, and C100.

Belongs to the complex I 23 kDa subunit family. As to quaternary structure, NDH-1 is composed of 14 different subunits. Subunits NuoA, H, J, K, L, M, N constitute the membrane sector of the complex. [4Fe-4S] cluster serves as cofactor.

The protein resides in the cell inner membrane. It catalyses the reaction a quinone + NADH + 5 H(+)(in) = a quinol + NAD(+) + 4 H(+)(out). NDH-1 shuttles electrons from NADH, via FMN and iron-sulfur (Fe-S) centers, to quinones in the respiratory chain. The immediate electron acceptor for the enzyme in this species is believed to be ubiquinone. Couples the redox reaction to proton translocation (for every two electrons transferred, four hydrogen ions are translocated across the cytoplasmic membrane), and thus conserves the redox energy in a proton gradient. This chain is NADH-quinone oxidoreductase subunit I 2, found in Cereibacter sphaeroides (strain ATCC 17023 / DSM 158 / JCM 6121 / CCUG 31486 / LMG 2827 / NBRC 12203 / NCIMB 8253 / ATH 2.4.1.) (Rhodobacter sphaeroides).